A 229-amino-acid chain; its full sequence is 3-isopropylmalate dehydratase small subunit (229 aa).

Residues 208-229 form a disordered region; it reads KIESAREPDDDWTGPLADRGII.

Belongs to the LeuD family. LeuD type 1 subfamily. Heterodimer of LeuC and LeuD.

The catalysed reaction is (2R,3S)-3-isopropylmalate = (2S)-2-isopropylmalate. It participates in amino-acid biosynthesis; L-leucine biosynthesis; L-leucine from 3-methyl-2-oxobutanoate: step 2/4. Its function is as follows. Catalyzes the isomerization between 2-isopropylmalate and 3-isopropylmalate, via the formation of 2-isopropylmaleate. The protein is 3-isopropylmalate dehydratase small subunit of Bifidobacterium longum subsp. infantis (strain ATCC 15697 / DSM 20088 / JCM 1222 / NCTC 11817 / S12).